Reading from the N-terminus, the 310-residue chain is Coproporphyrin III ferrochelatase (310 aa).

Fe-coproporphyrin III-binding positions include Tyr13, Arg30, Arg46 to Tyr47, Ser54, and Tyr125. Fe(2+) is bound by residues His183 and Glu264.

The protein belongs to the ferrochelatase family.

The protein localises to the cytoplasm. It catalyses the reaction Fe-coproporphyrin III + 2 H(+) = coproporphyrin III + Fe(2+). Its pathway is porphyrin-containing compound metabolism; protoheme biosynthesis. In terms of biological role, involved in coproporphyrin-dependent heme b biosynthesis. Catalyzes the insertion of ferrous iron into coproporphyrin III to form Fe-coproporphyrin III. This is Coproporphyrin III ferrochelatase from Geobacillus sp. (strain WCH70).